Consider the following 472-residue polypeptide: MDSDRCLTDEISLNTLSSTFASDNNLRRKENFLKSRYPSKFDLNVSMLTKSDDVGKTPFSIFDSPSNPGFSRSHQMCSDKNKSPFLFDKIRDEPVSVDPVKLIINNRNKRKINRQKSRLQGLYRSDANGLQPLNSENVKMKKSTALSLTSSPLNSWKTDFKTPPKANVVCISLVIEGDGCASLLYEDLNQISNSCPEVAPNRQNALFSDETLTTMFYSGVTEDEGSCNNLLQSSFGDDLDLGMQRSATWAPGYNYPSKFDSIPFASASPKIKAAFPFDPNVYALNTNDGPVTSTDNNCDQLNTRMQAWNNGFNYSNLNGDIQYPAVTPKFFQQEGRALNVSDCNFGNEEIAYGGIPMRVCHSDSTLCDARIAAKQALKGKRQYDTSTSKAELSTPPSKRRHIDDADLVFHSSPLLSRSRFICCYCTKPFLSISKLQEHESSCSHVERLFGFAPNRLYDDGDGFLGSSFCSDW.

Residues 420-444 form a C2H2-type zinc finger; sequence FICCYCTKPFLSISKLQEHESSCSH.

It localises to the nucleus. Transcriptional activator that controls the onset of premeiotic DNA synthesis by regulating res2 and some other factor(s) in a mei2 independent cascade. The chain is Transcriptional activator protein rec16 (rec16) from Schizosaccharomyces pombe (strain 972 / ATCC 24843) (Fission yeast).